Reading from the N-terminus, the 387-residue chain is Succinate--CoA ligase [ADP-forming] subunit beta (387 aa).

Residues 9 to 236 (KELFAKHNVP…RDATDPLELK (228 aa)) enclose the ATP-grasp domain. Residues Lys-45, 52-54 (GRG), Ser-94, and Glu-99 contribute to the ATP site. Asn-191 and Asp-205 together coordinate Mg(2+). Substrate is bound by residues Asn-256 and 318-320 (GIT).

This sequence belongs to the succinate/malate CoA ligase beta subunit family. In terms of assembly, heterotetramer of two alpha and two beta subunits. The cofactor is Mg(2+).

The catalysed reaction is succinate + ATP + CoA = succinyl-CoA + ADP + phosphate. It catalyses the reaction GTP + succinate + CoA = succinyl-CoA + GDP + phosphate. The protein operates within carbohydrate metabolism; tricarboxylic acid cycle; succinate from succinyl-CoA (ligase route): step 1/1. Its function is as follows. Succinyl-CoA synthetase functions in the citric acid cycle (TCA), coupling the hydrolysis of succinyl-CoA to the synthesis of either ATP or GTP and thus represents the only step of substrate-level phosphorylation in the TCA. The beta subunit provides nucleotide specificity of the enzyme and binds the substrate succinate, while the binding sites for coenzyme A and phosphate are found in the alpha subunit. The protein is Succinate--CoA ligase [ADP-forming] subunit beta of Mycolicibacterium smegmatis (strain ATCC 700084 / mc(2)155) (Mycobacterium smegmatis).